We begin with the raw amino-acid sequence, 212 residues long: 3,4-dihydroxy-2-butanone 4-phosphate synthase (212 aa).

D-ribulose 5-phosphate is bound by residues 37–38, Asp42, 150–154, and Glu174; these read RE and RRGHT. Glu38 serves as a coordination point for Mg(2+). A Mg(2+)-binding site is contributed by His153.

This sequence belongs to the DHBP synthase family. In terms of assembly, homodimer. The cofactor is Mg(2+). It depends on Mn(2+) as a cofactor.

The catalysed reaction is D-ribulose 5-phosphate = (2S)-2-hydroxy-3-oxobutyl phosphate + formate + H(+). The protein operates within cofactor biosynthesis; riboflavin biosynthesis; 2-hydroxy-3-oxobutyl phosphate from D-ribulose 5-phosphate: step 1/1. Its function is as follows. Catalyzes the conversion of D-ribulose 5-phosphate to formate and 3,4-dihydroxy-2-butanone 4-phosphate. In Shewanella halifaxensis (strain HAW-EB4), this protein is 3,4-dihydroxy-2-butanone 4-phosphate synthase.